The chain runs to 300 residues: GTPase Era (300 aa).

In terms of domain architecture, Era-type G spans 4-172; that stretch reads KSGFVALIGR…LEKIKKLLPE (169 aa). Residues 12–19 form a G1 region; it reads GRPNVGKS. 12-19 contacts GTP; the sequence is GRPNVGKS. Residues 38–42 form a G2 region; that stretch reads QTTRN. The tract at residues 59 to 62 is G3; the sequence is DTPG. Residues 59–63 and 122–125 each bind GTP; these read DTPGV and NKAD. The segment at 122–125 is G4; the sequence is NKAD. Positions 151–153 are G5; the sequence is IAA. The KH type-2 domain occupies 195-281; that stretch reads IREKILLNLS…NLQLWVKVKK (87 aa).

Belongs to the TRAFAC class TrmE-Era-EngA-EngB-Septin-like GTPase superfamily. Era GTPase family. Monomer.

Its subcellular location is the cytoplasm. The protein resides in the cell membrane. In terms of biological role, an essential GTPase that binds both GDP and GTP, with rapid nucleotide exchange. Plays a role in 16S rRNA processing and 30S ribosomal subunit biogenesis and possibly also in cell cycle regulation and energy metabolism. This Caldicellulosiruptor saccharolyticus (strain ATCC 43494 / DSM 8903 / Tp8T 6331) protein is GTPase Era.